Here is a 603-residue protein sequence, read N- to C-terminus: MNSFRESDEEDNNPFSGTNHLYASGIGAVPEGDDDFLSAEVDTADETVQETREQMMSRLFGECEGPRESSAGGWTSGSMGSIGAPDGHSDEVTEFGIDTVLVEGEVRTPGRARVPASYPDAEGSLGALRIVDAGQYKDTFGNYAIGYTIAYEGRQVTRRYSEFDSLRQALARLLPTVIIPPIPSKHPLIRYFLNPLNAENDIRIIEKRRRLLSRFLNNCHDITDIREHTVFQKFLNPEYIWSEVLLTPPVSILPTNNLLAPPLNPTKPSPLHLLLPTPPRRTTSYGSPKTNNPEYDIRFTELESLLLRYHKCLQPVLASSRQKKIHFKQLASSLADLGAYYNAFSLEDNVINLPHQMDQIRDLSRAIEKIGQAVDVNYVSSELLVENIMILLEEPIGEMLQFVQEGREVLRFRMQKQQQFHIIDTTIKKRRGRIEELRNFQAQLARLEAALKQNAEESPTIARAVQRLDAQHLHKQRKSPSGELQWTGLFKSRSGSVRTHDSLTTRPVTGDVDVDLLSDEERAREIARLEGDLEKLNECYKLIQRDMLQVNESMARSFDWFIMYLHDTWALVLRNYTRTLLNWLKDCLTAWKNARVTIDTIAV.

Positions 1–36 (MNSFRESDEEDNNPFSGTNHLYASGIGAVPEGDDDF) are disordered. A PX domain is found at 121–241 (AEGSLGALRI…QKFLNPEYIW (121 aa)). A 1,2-diacyl-sn-glycero-3-phospho-(1D-myo-inositol-3-phosphate)-binding residues include Arg-159, Ser-161, Lys-185, and Arg-208.

It belongs to the sorting nexin family.

It is found in the endosome membrane. The protein localises to the endomembrane system. May be required for cytoplasm to vacuole transport (Cvt) and pexophagy. This Eremothecium gossypii (strain ATCC 10895 / CBS 109.51 / FGSC 9923 / NRRL Y-1056) (Yeast) protein is Sorting nexin-41 (SNX41).